A 326-amino-acid chain; its full sequence is Undecaprenyl-phosphate 4-deoxy-4-formamido-L-arabinose transferase (326 aa).

The Cytoplasmic segment spans residues 1–235; the sequence is MFEIHPIKKV…TCLTTTPLRM (235 aa). A helical transmembrane segment spans residues 236 to 256; it reads LSLLGSIIATSGFSLAILLVV. Over 257 to 269 the chain is Periplasmic; sequence LRLAFGSQWSGEG. The chain crosses the membrane as a helical span at residues 270-290; sequence VFMLFAVLFTFIGAQFIGMGL. Topologically, residues 291 to 326 are cytoplasmic; sequence LGEYIGRIYNDVRARPRYFVQKVIRPASSIDIEENH.

The protein belongs to the glycosyltransferase 2 family.

The protein resides in the cell inner membrane. The enzyme catalyses UDP-4-deoxy-4-formamido-beta-L-arabinose + di-trans,octa-cis-undecaprenyl phosphate = 4-deoxy-4-formamido-alpha-L-arabinopyranosyl di-trans,octa-cis-undecaprenyl phosphate + UDP. It functions in the pathway glycolipid biosynthesis; 4-amino-4-deoxy-alpha-L-arabinose undecaprenyl phosphate biosynthesis; 4-amino-4-deoxy-alpha-L-arabinose undecaprenyl phosphate from UDP-4-deoxy-4-formamido-beta-L-arabinose and undecaprenyl phosphate: step 1/2. Its pathway is bacterial outer membrane biogenesis; lipopolysaccharide biosynthesis. Functionally, catalyzes the transfer of 4-deoxy-4-formamido-L-arabinose from UDP to undecaprenyl phosphate. The modified arabinose is attached to lipid A and is required for resistance to polymyxin and cationic antimicrobial peptides. The polypeptide is Undecaprenyl-phosphate 4-deoxy-4-formamido-L-arabinose transferase (Escherichia fergusonii (strain ATCC 35469 / DSM 13698 / CCUG 18766 / IAM 14443 / JCM 21226 / LMG 7866 / NBRC 102419 / NCTC 12128 / CDC 0568-73)).